The primary structure comprises 308 residues: Bifunctional protein FolD (308 aa).

NADP(+) contacts are provided by residues 171 to 173 (GRS), Ser198, and Ile239.

The protein belongs to the tetrahydrofolate dehydrogenase/cyclohydrolase family. As to quaternary structure, homodimer.

The catalysed reaction is (6R)-5,10-methylene-5,6,7,8-tetrahydrofolate + NADP(+) = (6R)-5,10-methenyltetrahydrofolate + NADPH. It carries out the reaction (6R)-5,10-methenyltetrahydrofolate + H2O = (6R)-10-formyltetrahydrofolate + H(+). It functions in the pathway one-carbon metabolism; tetrahydrofolate interconversion. Catalyzes the oxidation of 5,10-methylenetetrahydrofolate to 5,10-methenyltetrahydrofolate and then the hydrolysis of 5,10-methenyltetrahydrofolate to 10-formyltetrahydrofolate. This is Bifunctional protein FolD from Borreliella burgdorferi (strain ZS7) (Borrelia burgdorferi).